Consider the following 92-residue polypeptide: Integration host factor subunit beta (92 aa).

It belongs to the bacterial histone-like protein family. Heterodimer of an alpha and a beta chain.

Functionally, this protein is one of the two subunits of integration host factor, a specific DNA-binding protein that functions in genetic recombination as well as in transcriptional and translational control. This Vibrio cholerae serotype O1 (strain ATCC 39541 / Classical Ogawa 395 / O395) protein is Integration host factor subunit beta.